Here is a 244-residue protein sequence, read N- to C-terminus: B3 domain-containing protein At2g36080 (244 aa).

A DNA-binding region (TF-B3) is located at residues 38–144; that stretch reads FEKPLTPSDV…RFFIGWRRRG (107 aa).

The protein resides in the nucleus. This chain is B3 domain-containing protein At2g36080 (ARF31), found in Arabidopsis thaliana (Mouse-ear cress).